A 165-amino-acid chain; its full sequence is Nascent polypeptide-associated complex subunit beta (165 aa).

An NAC-A/B domain is found at 33–97; it reads TTDDKRLQST…PQTKKLQDIL (65 aa). The interval 120-165 is disordered; the sequence is QKQAPGAGDVPATIQEEDDDDDVPDLVVGETFETPATEEAPKAAAS. The segment covering 134–143 has biased composition (acidic residues); sequence QEEDDDDDVP. A compositionally biased stretch (low complexity) spans 144 to 165; that stretch reads DLVVGETFETPATEEAPKAAAS.

It belongs to the NAC-beta family. Part of the nascent polypeptide-associated complex (NAC).

This Arabidopsis thaliana (Mouse-ear cress) protein is Nascent polypeptide-associated complex subunit beta.